Consider the following 295-residue polypeptide: G1/S-specific cyclin-D1 (295 aa).

The 125-residue stretch at 28-152 (LRAMLKAEET…LLVNKLKWNL (125 aa)) folds into the Cyclin N-terminal domain. Residues 262-295 (AQQNMDPKAAEEEEEEEEEVDLACTPTDVRDVDI) form a disordered region. K269 is covalently cross-linked (Glycyl lysine isopeptide (Lys-Gly) (interchain with G-Cter in ubiquitin)). The segment covering 272–282 (EEEEEEEEEVD) has biased composition (acidic residues). T286 is subject to Phosphothreonine.

The protein belongs to the cyclin family. Cyclin D subfamily. In terms of assembly, interacts with either CDK4 or CDK6 protein kinase to form a serine/threonine kinase holoenzyme complex. The cyclin subunit imparts substrate specificity to the complex. Component of the ternary complex CCND1/CDK4/CDKN1B required for nuclear translocation and modulation of CDK4-mediated kinase activity. Interacts directly with CDKN1B. Can form similar complexes with either CDKN1A or CDKN2A. Interacts with UHRF2; the interaction ubiquitinates CCND1 and appears to occur independently of phosphorylation. Interacts with USP2. Interacts (via cyclin N-terminal domain) with INSM1 (via N-terminal region); the interaction competes with the binding of CCND1 to CDK4 during cell cycle progression and inhibits CDK4 activity. Interacts with CDK4; the interaction is prevented with the binding of CCND1 to INSM1 during cell cycle progression. Post-translationally, phosphorylation at Thr-286 by MAP kinases is required for ubiquitination and degradation by the DCX(AMBRA1) complex. It also plays an essential role for recognition by the FBXO31 component of SCF (SKP1-cullin-F-box) protein ligase complex following DNA damage. In terms of processing, ubiquitinated at Lys-269 by the DCX(AMBRA1) complex during the transition from G1 to S cell phase, leading to its degradation: ubiquitination is dependent on Thr-286 phosphorylation. The DCX(AMBRA1) complex represents the major regulator of CCND1 stability during the G1/S transition. Also ubiquitinated by the SCF(FBXO4) and Cul7-RING(FBXW8) ubiquitin-protein ligase complexes. Following DNA damage it is ubiquitinated by the SCF(FBXO31) protein ligase complex. SCF(FBXO31) ubiquitination is dependent on Thr-286 phosphorylation. Ubiquitinated also by UHRF2 apparently in a phosphorylation-independent manner. Ubiquitination leads to its degradation and G1 arrest. Deubiquitinated by USP2; leading to its stabilization.

The protein localises to the nucleus. The protein resides in the cytoplasm. It localises to the nucleus membrane. Functionally, regulatory component of the cyclin D1-CDK4 (DC) complex that phosphorylates and inhibits members of the retinoblastoma (RB) protein family including RB1 and regulates the cell-cycle during G(1)/S transition. Phosphorylation of RB1 allows dissociation of the transcription factor E2F from the RB/E2F complex and the subsequent transcription of E2F target genes which are responsible for the progression through the G(1) phase. Hypophosphorylates RB1 in early G(1) phase. Cyclin D-CDK4 complexes are major integrators of various mitogenenic and antimitogenic signals. Also a substrate for SMAD3, phosphorylating SMAD3 in a cell-cycle-dependent manner and repressing its transcriptional activity. Component of the ternary complex, cyclin D1/CDK4/CDKN1B, required for nuclear translocation and activity of the cyclin D-CDK4 complex. Exhibits transcriptional corepressor activity with INSM1 on the NEUROD1 and INS promoters in a cell cycle-independent manner. In Pongo abelii (Sumatran orangutan), this protein is G1/S-specific cyclin-D1 (CCND1).